We begin with the raw amino-acid sequence, 374 residues long: Probable Histone-lysine N-methyltransferase ATXR5 (374 aa).

Residues 1–46 (MAPASITTTTTVARRIVGSRRRTKATSPPDSPPPKKLKPISEILAK) constitute a chloroplast transit peptide. The segment at 16-38 (IVGSRRRTKATSPPDSPPPKKLK) is disordered. Residues 59–109 (DVSCMQCGSGERAEELLLCDKCDKGFHMKCVRPIVVRVPIGSWLCPKCSGQ) form a PHD-type zinc finger. Substrate is bound at residue Met216. In terms of domain architecture, SET spans 240-362 (PPLLVVFDSR…KGERLYYDYN (123 aa)). S-adenosyl-L-methionine-binding positions include 250–252 (EGF) and 312–316 (RFISG). Substrate-binding positions include Arg334 and 364 to 365 (YE). Tyr368 and Val374 together coordinate S-adenosyl-L-methionine.

Belongs to the class V-like SAM-binding methyltransferase superfamily. As to quaternary structure, homodimer.

It localises to the plastid. It is found in the chloroplast. Its subcellular location is the nucleus. It carries out the reaction L-lysyl(27)-[histone H3] + S-adenosyl-L-methionine = N(6)-methyl-L-lysyl(27)-[histone H3] + S-adenosyl-L-homocysteine + H(+). Its function is as follows. Histone methyltransferase that specifically monomethylates 'Lys-27' of histone H3 (H3K27me1). Has much higher activity on nucleosomes containing H3.1 than H3.3. Involved in the formation of constitutive heterochromatin and the silencing of heterochromatic elements. This chain is Probable Histone-lysine N-methyltransferase ATXR5 (ATXR5), found in Ricinus communis (Castor bean).